The primary structure comprises 148 residues: UPF0756 membrane protein YeaL (148 aa).

Helical transmembrane passes span 14–34 (ALGF…LIIV), 51–71 (LSIG…SGTL), 86–106 (LVAI…VTLM), and 121–141 (VLGV…AGLV).

This sequence belongs to the UPF0756 family.

It localises to the cell membrane. The protein is UPF0756 membrane protein YeaL of Escherichia coli (strain B / REL606).